The following is a 257-amino-acid chain: tRNA (guanine-N(7)-)-methyltransferase (257 aa).

The tract at residues 1–58 is disordered; sequence MQPIEQPGTGPDDITPESQDTNTAESAESGAETGHPRRIRSFVRRAGRTSTGQQRAIN. The span at 16 to 26 shows a compositional bias: polar residues; it reads PESQDTNTAES. Residues 36 to 47 show a composition bias toward basic residues; sequence PRRIRSFVRRAG. The S-adenosyl-L-methionine site is built by Glu89, Glu114, Asp141, and Asp164. Asp164 is a catalytic residue. A substrate-binding site is contributed by Lys168. The tract at residues 170–175 is interaction with RNA; that stretch reads RHNKRR. Substrate-binding positions include Asp200 and 235 to 238; that span reads TKFE.

This sequence belongs to the class I-like SAM-binding methyltransferase superfamily. TrmB family.

It carries out the reaction guanosine(46) in tRNA + S-adenosyl-L-methionine = N(7)-methylguanosine(46) in tRNA + S-adenosyl-L-homocysteine. It functions in the pathway tRNA modification; N(7)-methylguanine-tRNA biosynthesis. Its function is as follows. Catalyzes the formation of N(7)-methylguanine at position 46 (m7G46) in tRNA. In Ralstonia pickettii (strain 12J), this protein is tRNA (guanine-N(7)-)-methyltransferase.